The following is a 471-amino-acid chain: Putative multidrug resistance protein MdtD (471 aa).

The Periplasmic segment spans residues 1–11 (MTDLPDSTRWQ). The helical transmembrane segment at 12–32 (LWIVAFGFFMQSLDTTIVNTA) threads the bilayer. Residues 33–48 (LPSMAQSLGESPLHMH) lie on the Cytoplasmic side of the membrane. The chain crosses the membrane as a helical span at residues 49–69 (MVIVSYVLTVAVMLPASGWLA). Residues 70–76 (DKVGVRN) are Periplasmic-facing. A helical transmembrane segment spans residues 77–97 (IFFTAIVLFTLGSLFCALSGT). At 98 to 101 (LNEL) the chain is on the cytoplasmic side. A helical membrane pass occupies residues 102-124 (LLARALQGVGGAMMVPVGRLTVM). Topologically, residues 125-137 (KIVPREQYMAAMT) are periplasmic. A helical transmembrane segment spans residues 138–158 (FVTLPGQVGPLLGPALGGLLV). Over 159-164 (EYASWH) the chain is Cytoplasmic. A helical transmembrane segment spans residues 165–185 (WIFLINIPVGIIGAIATLMLM). The Periplasmic segment spans residues 186–196 (PNYTMQTRRFD). The chain crosses the membrane as a helical span at residues 197-217 (LSGFLLLAVGMAVLTLALDGS). Residues 218–224 (KGTGLSP) lie on the Cytoplasmic side of the membrane. The helical transmembrane segment at 225–245 (LTIDGLVAVGVVALVLYLLHA) threads the bilayer. The Periplasmic portion of the chain corresponds to 246–262 (RNNNRALFSLKLFRTRT). A helical membrane pass occupies residues 263–283 (FSLGLAGSFAGRIGSGMLPFM). Topologically, residues 284 to 285 (TP) are cytoplasmic. The chain crosses the membrane as a helical span at residues 286–306 (VFLQIGLGFSPFHAGLMMIPM). The Periplasmic segment spans residues 307–341 (VLGSMGMKRIVVQVVNRFGYRRVLVATTLGLSLVT). A helical transmembrane segment spans residues 342 to 362 (LLFMTTALLGWYYVLPFVLFL). At 363-395 (QGMVNSTRFSSMNTLTLKDLPDNLASSGNSLLS) the chain is on the cytoplasmic side. Residues 396 to 416 (MIMQLSMSIGVTIAGLLLGLF) form a helical membrane-spanning segment. At 417 to 430 (GSQHVSIDSGTTQT) the chain is on the periplasmic side. Residues 431-451 (VFMYTWLSMALIIALPAFIFA) form a helical membrane-spanning segment. Residues 452–471 (RVPNDTHQNVAISRRKRSAQ) are Cytoplasmic-facing.

Belongs to the major facilitator superfamily. TCR/Tet family.

It is found in the cell inner membrane. This is Putative multidrug resistance protein MdtD from Escherichia coli (strain SE11).